The sequence spans 197 residues: MSYYAFEGLIPVVHPEAYVHPSAVLIGDVIVGAGVYIGPLASLRGDYGRLILEAGANLQDGCIMHGYCDTDTIVHENGHIGHGAILHGCVIGRDALVGMNSVIMDGAIIGEESIVAAMSFVKAGFVGAPRQLLVGAPARVKRDVTDEELHWKRLNTQEYQDLAVRCRASLCETQPLTQVEKNRPRLKGTTEVKPKSA.

It belongs to the transferase hexapeptide repeat family.

It participates in amine and polyamine metabolism; carnitine metabolism. In terms of biological role, overproduction of CaiE stimulates the activity of CaiB and CaiD. The chain is Carnitine operon protein CaiE from Citrobacter koseri (strain ATCC BAA-895 / CDC 4225-83 / SGSC4696).